The following is a 276-amino-acid chain: NH(3)-dependent NAD(+) synthetase (276 aa).

43–50 (GISGGVDS) is an ATP binding site. Mg(2+) is bound at residue D49. R146 serves as a coordination point for deamido-NAD(+). Residue T166 coordinates ATP. Mg(2+) is bound at residue E171. Deamido-NAD(+)-binding residues include K179 and D186. ATP-binding residues include K195 and T217. Residue 266-267 (HK) participates in deamido-NAD(+) binding.

The protein belongs to the NAD synthetase family. As to quaternary structure, homodimer.

It catalyses the reaction deamido-NAD(+) + NH4(+) + ATP = AMP + diphosphate + NAD(+) + H(+). It functions in the pathway cofactor biosynthesis; NAD(+) biosynthesis; NAD(+) from deamido-NAD(+) (ammonia route): step 1/1. In terms of biological role, catalyzes the ATP-dependent amidation of deamido-NAD to form NAD. Uses ammonia as a nitrogen source. The polypeptide is NH(3)-dependent NAD(+) synthetase (Vibrio vulnificus (strain CMCP6)).